The chain runs to 343 residues: S-adenosylmethionine:tRNA ribosyltransferase-isomerase (343 aa).

The protein belongs to the QueA family. As to quaternary structure, monomer.

Its subcellular location is the cytoplasm. The catalysed reaction is 7-aminomethyl-7-carbaguanosine(34) in tRNA + S-adenosyl-L-methionine = epoxyqueuosine(34) in tRNA + adenine + L-methionine + 2 H(+). It functions in the pathway tRNA modification; tRNA-queuosine biosynthesis. Its function is as follows. Transfers and isomerizes the ribose moiety from AdoMet to the 7-aminomethyl group of 7-deazaguanine (preQ1-tRNA) to give epoxyqueuosine (oQ-tRNA). The sequence is that of S-adenosylmethionine:tRNA ribosyltransferase-isomerase from Latilactobacillus sakei subsp. sakei (strain 23K) (Lactobacillus sakei subsp. sakei).